Here is a 548-residue protein sequence, read N- to C-terminus: uncharacterized protein (548 aa).

Residues S19 and S25 each carry the phosphoserine modification. T47 carries the phosphothreonine modification.

This is an uncharacterized protein from Schizosaccharomyces pombe (strain 972 / ATCC 24843) (Fission yeast).